A 410-amino-acid polypeptide reads, in one-letter code: MEKLVERFLNYVTFDTKSDPSNQQCPSSPGQITFAEALKLELVALDLVDVSLDDNGYLMAKLPSNVDYPVPAIGFVAHMDTAPDASGANVKPQVIKDYRGGTIELGESGESLSPSQYPDLDSLHGHDLITTDGTTLLGADNKAGIAEIISAIAYLKANPDIKHGDICIGFTPDEEIGRGANLFDVEKFGAEWAYTIDGGPVGELEFENFNATSADVICHGVNVHPGTAKGKMVNSMNIAAQFQLMMPAQETPECTEGYEGFYHLKSAEMGVARSELGYIIRDFEREGVEARKAVMQQKVDELNERLEKGRVELVLTDSYFNMKEMVEPHQHIIELAKQAMIECDVEPMIKPIRGGTDGARLSFMGLPCPNIFTGGYNFHGIHEFITIQGMEQAVKVIVELSQRTATHYQK.

His78 lines the Zn(2+) pocket. Asp80 is a catalytic residue. Residue Asp140 coordinates Zn(2+). The Proton acceptor role is filled by Glu174. Zn(2+) contacts are provided by Glu175, Asp197, and His379.

It belongs to the peptidase M20B family. Zn(2+) is required as a cofactor.

Its subcellular location is the cytoplasm. It catalyses the reaction Release of the N-terminal residue from a tripeptide.. Cleaves the N-terminal amino acid of tripeptides. The polypeptide is Peptidase T (Vibrio atlanticus (strain LGP32) (Vibrio splendidus (strain Mel32))).